The primary structure comprises 225 residues: Small ribosomal subunit protein uS5 (225 aa).

The region spanning 57–120 (LEEQVLDVKL…AHAKLSLIKV (64 aa)) is the S5 DRBM domain.

Belongs to the universal ribosomal protein uS5 family. As to quaternary structure, part of the 30S ribosomal subunit. Contacts protein S4.

Functionally, with S4 and S12 plays an important role in translational accuracy. The sequence is that of Small ribosomal subunit protein uS5 from Methanococcus maripaludis (strain DSM 14266 / JCM 13030 / NBRC 101832 / S2 / LL).